The sequence spans 432 residues: Endosome-associated-trafficking regulator 1 (432 aa).

S18 is modified (phosphoserine). The segment covering 126–143 has biased composition (basic and acidic residues); that stretch reads DTTTSRIYPKEASRHPLG. The tract at residues 126 to 145 is disordered; the sequence is DTTTSRIYPKEASRHPLGLE. S148 carries the phosphoserine modification. Positions 174–196 are required for interaction with PTPN13; it reads LEEDEDDGWNITYLPSAVDQTHS. The disordered stretch occupies residues 226-250; the sequence is PPWTLSDTDSRISPASPAGSPNADF. 2 positions are modified to phosphoserine: S241 and S245. Coiled coils occupy residues 262 to 289 and 315 to 370; these read LRTL…VQSF and FHDL…LRSG.

This sequence belongs to the ENTR1 family. As to quaternary structure, found in a complex with ENTR1, PTPN13 and GIT1. Interacts with PTPN13 (via the FERM domain). Interacts (via N-terminus) with GIT1 (via N- and C-terminus); this interaction is direct. Interacts with NOD2. Interacts (via N-terminus) with IFT88. Interacts with VPS35. Phosphorylated.

The protein resides in the cytoplasm. It localises to the early endosome. Its subcellular location is the endosome. The protein localises to the recycling endosome. It is found in the midbody. The protein resides in the cytoskeleton. It localises to the microtubule organizing center. Its subcellular location is the centrosome. The protein localises to the cilium basal body. In terms of biological role, may be involved in modulation of TNF response. May be involved in presentation of TNFRSF1A on the cell surface. Involved in the endosome-to-plasma membrane trafficking and recycling of SNX27-retromer-dependent cargo proteins, such as GLUT1. Involved in the regulation of cytokinesis; the function may involve PTPN13 and GIT1. Its function is as follows. Endosome-associated protein that plays a role in membrane receptor sorting, cytokinesis and ciliogenesis. Involved in the endosome-to-plasma membrane trafficking and recycling of SNX27-retromer-dependent cargo proteins, such as GLUT1. Involved in the regulation of cytokinesis; the function may involve PTPN13 and GIT1. Plays a role in the formation of cilia. Involved in cargo protein localization, such as PKD2, at primary cilia. Involved in the presentation of the tumor necrosis factor (TNF) receptor TNFRSF1A on the cell surface, and hence in the modulation of the TNF-induced apoptosis. In Mus musculus (Mouse), this protein is Endosome-associated-trafficking regulator 1.